A 412-amino-acid polypeptide reads, in one-letter code: Short-chain specific acyl-CoA dehydrogenase, mitochondrial (412 aa).

Residues 1 to 24 (MAAALLARASGPARRALCPRAWRQ) constitute a mitochondrion transit peptide. At Thr27 the chain carries Phosphothreonine. At Lys51 the chain carries N6-acetyllysine; alternate. Lys51 carries the N6-succinyllysine; alternate modification. Residue Lys72 is modified to N6-acetyllysine. Residue Lys129 is modified to N6-acetyllysine; alternate. Lys129 bears the N6-succinyllysine; alternate mark. FAD contacts are provided by residues 152–161 (FALSEPGNGS) and 185–187 (WIT). Ser161 serves as a coordination point for substrate. Lys208 is modified (N6-acetyllysine). Lys262 carries the N6-acetyllysine; alternate modification. Lys262 carries the post-translational modification N6-succinyllysine; alternate. 269–272 (DMGR) provides a ligand contact to substrate. Position 297 (Arg297) interacts with FAD. An N6-acetyllysine; alternate modification is found at Lys306. Lys306 bears the N6-succinyllysine; alternate mark. FAD-binding positions include Gln308 and 365–369 (QILGG). Glu392 serves as the catalytic Proton acceptor. Gly393 is a binding site for substrate. 394 to 396 (TSE) provides a ligand contact to FAD.

This sequence belongs to the acyl-CoA dehydrogenase family. In terms of assembly, homotetramer. It depends on FAD as a cofactor.

The protein resides in the mitochondrion matrix. It carries out the reaction a short-chain 2,3-saturated fatty acyl-CoA + oxidized [electron-transfer flavoprotein] + H(+) = a short-chain (2E)-enoyl-CoA + reduced [electron-transfer flavoprotein]. The catalysed reaction is butanoyl-CoA + oxidized [electron-transfer flavoprotein] + H(+) = (2E)-butenoyl-CoA + reduced [electron-transfer flavoprotein]. It catalyses the reaction pentanoyl-CoA + oxidized [electron-transfer flavoprotein] + H(+) = (2E)-pentenoyl-CoA + reduced [electron-transfer flavoprotein]. The enzyme catalyses hexanoyl-CoA + oxidized [electron-transfer flavoprotein] + H(+) = (2E)-hexenoyl-CoA + reduced [electron-transfer flavoprotein]. The protein operates within lipid metabolism; mitochondrial fatty acid beta-oxidation. Its function is as follows. Short-chain specific acyl-CoA dehydrogenase is one of the acyl-CoA dehydrogenases that catalyze the first step of mitochondrial fatty acid beta-oxidation, an aerobic process breaking down fatty acids into acetyl-CoA and allowing the production of energy from fats. The first step of fatty acid beta-oxidation consists in the removal of one hydrogen from C-2 and C-3 of the straight-chain fatty acyl-CoA thioester, resulting in the formation of trans-2-enoyl-CoA. Among the different mitochondrial acyl-CoA dehydrogenases, short-chain specific acyl-CoA dehydrogenase acts specifically on acyl-CoAs with saturated 4 to 6 carbons long primary chains. This Homo sapiens (Human) protein is Short-chain specific acyl-CoA dehydrogenase, mitochondrial (ACADS).